The sequence spans 890 residues: Possible lysine-specific histone demethylase 1 (890 aa).

Positions 1 to 13 are enriched in polar residues; that stretch reads MKPTQFGGSSSKM. The segment at 1-164 is disordered; the sequence is MKPTQFGGSS…TVLSGQEGAV (164 aa). Residues S24 and S27 each carry the phosphoserine modification. Over residues 84–109 the composition is skewed to polar residues; sequence NRPSGSGDTASNDKSGSASMGPNNQQ. Residues 110-122 are compositionally biased toward basic and acidic residues; it reads AERRSQSQTRKSE. The span at 123 to 138 shows a compositional bias: low complexity; the sequence is ANATSSSVSGPSAGNS. One can recognise an SWIRM domain in the interval 160 to 259; the sequence is QEGAVFQSRL…FGIFKRLKPI (100 aa). FAD is bound at residue 267–295; that stretch reads VIVIGAGISGLAVAHQLQQFGMDVIVLEA. The tract at residues 860–890 is disordered; the sequence is DLSPNLSDSSPSSKKSEENSNSNTADSTELQ. Low complexity predominate over residues 861–882; it reads LSPNLSDSSPSSKKSEENSNSN. Position 866 is a phosphoserine (S866).

It belongs to the flavin monoamine oxidase family. Component of a complex that contains at least HDAC1/Rpd3, CoRest and Su(var)3-3/Hdm. The cofactor is FAD.

It localises to the nucleus. Its subcellular location is the chromosome. Functionally, probable histone demethylase that specifically demethylates 'Lys-4' of histone H3, a specific tag for epigenetic transcriptional activation, thereby acting as a corepressor. Required for heterochromatic gene silencing. Acts by oxidizing the substrate by FAD to generate the corresponding imine that is subsequently hydrolyzed. Demethylates both mono- and tri-methylated 'Lys-4' of histone H3. May also demethylate 'Lys-9' of histone H3, Plays a role in the repression of neuronal genes. In Drosophila melanogaster (Fruit fly), this protein is Possible lysine-specific histone demethylase 1 (Su(var)3-3).